The chain runs to 481 residues: Zinc metalloproteinase/disintegrin (481 aa).

Residues 1-20 (MIEVLLVTICLAVFPYQGSS) form the signal peptide. The propeptide occupies 21 to 189 (IILESGNVND…KKASQLYLTP (169 aa)). Residue Glu190 is modified to Pyrrolidone carboxylic acid (Glu). The region spanning 197-392 (RYIKLAIVVD…DNPQCILNAP (196 aa)) is the Peptidase M12B domain. 296–299 (RNTI) lines the an L-amino acid tripeptide pocket. 3 disulfides stabilise this stretch: Cys308–Cys387, Cys349–Cys371, and Cys351–Cys354. His333 is a binding site for Zn(2+). The active site involves Glu334. The Zn(2+) site is built by His337 and His343. Ser357 provides a ligand contact to an L-amino acid tripeptide. The propeptide occupies 393–410 (LRTDTVSTPVSGNEFLEA). The region spanning 400-481 (TPVSGNEFLE…ADCPRNGLYG (82 aa)) is the Disintegrin domain. Cystine bridges form between Cys414/Cys429, Cys416/Cys424, Cys423/Cys446, Cys437/Cys443, Cys442/Cys467, and Cys455/Cys474. A Cell attachment site motif is present at residues 459-461 (RGD).

The protein belongs to the venom metalloproteinase (M12B) family. P-II subfamily. P-IIa sub-subfamily. In terms of assembly, monomer. Zn(2+) serves as cofactor. The N-terminus is blocked. As to expression, expressed by the venom gland.

It localises to the secreted. Its activity is regulated as follows. Inhibited by EDTA and 1,10-phenanthroline. Is also inhibited by endogenous tripeptide inhibitors pyroGlu-Asn-Trp, pyroGlu-Gln-Trp, and pyroGlu-Lys-Trp. Functionally, potent fibrinogenolytic protease which cleaves mainly the Aalpha chain of fibrinogen (FGA) and slightly the Bbeta (FGB) and the gamma (FGG) chains. May possess hemorrhagic activity. Compared to other SVMP, the substrate-binding pocket is relatively shallow. Is less susceptible to tripeptide inhibitors than TM-1 (AC U3KRG1) and TM-2. Its function is as follows. Inhibits platelet aggregation induced by ADP, thrombin, platelet-activating factor and collagen. Acts by inhibiting fibrinogen interaction with platelet receptors GPIIb/GPIIIa (ITGA2B/ITGB3). The chain is Zinc metalloproteinase/disintegrin from Protobothrops mucrosquamatus (Taiwan habu).